A 353-amino-acid chain; its full sequence is MIKKYSFVNHRIVLYLILGCVVVCGVWYSFDVRQAIDVGAVDLSLPQMSNNLLKEVAVGEGKTTNRLSRLPVDSTVPTVLPQSLAGSIAPPLPLDAYGHLARVSAVRDFFDYFLTAQNDLTPAALDEIVTHEIVKQLHGKSAQAEAQDVWTRYCAYFSQLVKLPDMGMVLGDKLDFVAVQRALDQRASLAVRTLGDWSEPFFGAEQQRQRYDLERLKIADDQALTDEQKKKRLVALEQKLPSKVQEERIKIQQQQDAVVKIIQLQKDEVTPDGIRLQVVGLLGPEVAYRVAEIRRQDEIWQEKYKHYAAQRAQRAQIEAQQLEPKEHDVQVENLRQRIFTKPGEALRAASLDQ.

A helical membrane pass occupies residues 12–32 (IVLYLILGCVVVCGVWYSFDV).

Belongs to the lipase chaperone family.

It localises to the cell inner membrane. Functionally, may be involved in the folding of the extracellular lipase during its passage through the periplasm. The polypeptide is Lipase chaperone (Xylella fastidiosa (strain M23)).